A 460-amino-acid chain; its full sequence is Light-independent protochlorophyllide reductase subunit N (460 aa).

3 residues coordinate [4Fe-4S] cluster: cysteine 22, cysteine 47, and cysteine 107.

It belongs to the BchN/ChlN family. In terms of assembly, protochlorophyllide reductase is composed of three subunits; ChlL, ChlN and ChlB. Forms a heterotetramer of two ChlB and two ChlN subunits. [4Fe-4S] cluster is required as a cofactor.

It is found in the plastid. The protein resides in the cyanelle. The catalysed reaction is chlorophyllide a + oxidized 2[4Fe-4S]-[ferredoxin] + 2 ADP + 2 phosphate = protochlorophyllide a + reduced 2[4Fe-4S]-[ferredoxin] + 2 ATP + 2 H2O. The protein operates within porphyrin-containing compound metabolism; chlorophyll biosynthesis (light-independent). Functionally, component of the dark-operative protochlorophyllide reductase (DPOR) that uses Mg-ATP and reduced ferredoxin to reduce ring D of protochlorophyllide (Pchlide) to form chlorophyllide a (Chlide). This reaction is light-independent. The NB-protein (ChlN-ChlB) is the catalytic component of the complex. This Cyanophora paradoxa protein is Light-independent protochlorophyllide reductase subunit N.